The sequence spans 329 residues: Beta-ketoacyl-[acyl-carrier-protein] synthase III (329 aa).

Active-site residues include C113 and H255. Positions 256-260 (QANQR) are ACP-binding. N285 is a catalytic residue.

Belongs to the thiolase-like superfamily. FabH family. Homodimer.

The protein resides in the cytoplasm. It carries out the reaction malonyl-[ACP] + acetyl-CoA + H(+) = 3-oxobutanoyl-[ACP] + CO2 + CoA. It participates in lipid metabolism; fatty acid biosynthesis. Catalyzes the condensation reaction of fatty acid synthesis by the addition to an acyl acceptor of two carbons from malonyl-ACP. Catalyzes the first condensation reaction which initiates fatty acid synthesis and may therefore play a role in governing the total rate of fatty acid production. Possesses both acetoacetyl-ACP synthase and acetyl transacylase activities. Its substrate specificity determines the biosynthesis of branched-chain and/or straight-chain of fatty acids. The sequence is that of Beta-ketoacyl-[acyl-carrier-protein] synthase III from Chlorobium phaeovibrioides (strain DSM 265 / 1930) (Prosthecochloris vibrioformis (strain DSM 265)).